A 287-amino-acid polypeptide reads, in one-letter code: 2-dehydro-3-deoxyphosphooctonate aldolase (287 aa).

It belongs to the KdsA family.

The protein localises to the cytoplasm. The enzyme catalyses D-arabinose 5-phosphate + phosphoenolpyruvate + H2O = 3-deoxy-alpha-D-manno-2-octulosonate-8-phosphate + phosphate. It functions in the pathway carbohydrate biosynthesis; 3-deoxy-D-manno-octulosonate biosynthesis; 3-deoxy-D-manno-octulosonate from D-ribulose 5-phosphate: step 2/3. The protein operates within bacterial outer membrane biogenesis; lipopolysaccharide biosynthesis. The chain is 2-dehydro-3-deoxyphosphooctonate aldolase from Rhodopseudomonas palustris (strain HaA2).